Reading from the N-terminus, the 954-residue chain is Valine--tRNA ligase (954 aa).

Residues 48–58 (PNVTGSLHMGH) carry the 'HIGH' region motif. The 'KMSKS' region signature appears at 560–564 (KMSKS). Lysine 563 provides a ligand contact to ATP. Residues 883–953 (AGFINKEAEL…IQEQYKAIEA (71 aa)) are a coiled coil.

Belongs to the class-I aminoacyl-tRNA synthetase family. ValS type 1 subfamily. In terms of assembly, monomer.

Its subcellular location is the cytoplasm. The enzyme catalyses tRNA(Val) + L-valine + ATP = L-valyl-tRNA(Val) + AMP + diphosphate. Its function is as follows. Catalyzes the attachment of valine to tRNA(Val). As ValRS can inadvertently accommodate and process structurally similar amino acids such as threonine, to avoid such errors, it has a 'posttransfer' editing activity that hydrolyzes mischarged Thr-tRNA(Val) in a tRNA-dependent manner. The polypeptide is Valine--tRNA ligase (Haemophilus influenzae (strain PittEE)).